A 213-amino-acid polypeptide reads, in one-letter code: Orotate phosphoribosyltransferase (213 aa).

Residue Lys-26 participates in 5-phospho-alpha-D-ribose 1-diphosphate binding. 34–35 (FF) serves as a coordination point for orotate. Residues 72-73 (YK), Arg-98, Lys-99, Lys-102, His-104, and 123-131 (DDVISAGTS) each bind 5-phospho-alpha-D-ribose 1-diphosphate. Orotate-binding residues include Ser-127 and Arg-155.

The protein belongs to the purine/pyrimidine phosphoribosyltransferase family. PyrE subfamily. Homodimer. The cofactor is Mg(2+).

The enzyme catalyses orotidine 5'-phosphate + diphosphate = orotate + 5-phospho-alpha-D-ribose 1-diphosphate. It functions in the pathway pyrimidine metabolism; UMP biosynthesis via de novo pathway; UMP from orotate: step 1/2. Its function is as follows. Catalyzes the transfer of a ribosyl phosphate group from 5-phosphoribose 1-diphosphate to orotate, leading to the formation of orotidine monophosphate (OMP). This is Orotate phosphoribosyltransferase from Neisseria meningitidis serogroup C (strain 053442).